We begin with the raw amino-acid sequence, 359 residues long: Glycerol-1-phosphate dehydrogenase [NAD(P)+] (359 aa).

NAD(+)-binding positions include 107–111 (GRVID) and 129–132 (TAAS). Residue D134 coordinates substrate. Residue S138 coordinates NAD(+). D181 serves as a coordination point for substrate. Zn(2+)-binding residues include D181 and H261. H265 contributes to the substrate binding site. Residue H277 participates in Zn(2+) binding.

It belongs to the glycerol-1-phosphate dehydrogenase family. Zn(2+) serves as cofactor.

It localises to the cytoplasm. It catalyses the reaction sn-glycerol 1-phosphate + NAD(+) = dihydroxyacetone phosphate + NADH + H(+). The catalysed reaction is sn-glycerol 1-phosphate + NADP(+) = dihydroxyacetone phosphate + NADPH + H(+). It participates in membrane lipid metabolism; glycerophospholipid metabolism. Catalyzes the NAD(P)H-dependent reduction of dihydroxyacetonephosphate (DHAP or glycerone phosphate) to glycerol 1-phosphate (G1P). The G1P thus generated is used as the glycerophosphate backbone of phospholipids in the cellular membranes of Archaea. The sequence is that of Glycerol-1-phosphate dehydrogenase [NAD(P)+] from Methanospirillum hungatei JF-1 (strain ATCC 27890 / DSM 864 / NBRC 100397 / JF-1).